The sequence spans 229 residues: Putative N-acetylmannosamine-6-phosphate 2-epimerase (229 aa).

The protein belongs to the NanE family.

It catalyses the reaction an N-acyl-D-glucosamine 6-phosphate = an N-acyl-D-mannosamine 6-phosphate. It functions in the pathway amino-sugar metabolism; N-acetylneuraminate degradation; D-fructose 6-phosphate from N-acetylneuraminate: step 3/5. Its function is as follows. Converts N-acetylmannosamine-6-phosphate (ManNAc-6-P) to N-acetylglucosamine-6-phosphate (GlcNAc-6-P). This chain is Putative N-acetylmannosamine-6-phosphate 2-epimerase, found in Escherichia coli O157:H7.